Consider the following 155-residue polypeptide: Transcriptional repressor NrdR (155 aa).

The segment at 3-34 (CPFCGNIDTQVKDSRPAEDHVSIRRRRFCPAC) is a zinc-finger region. The ATP-cone domain occupies 49–139 (LVVIKSSGKR…VYKNFQAADD (91 aa)).

The protein belongs to the NrdR family. It depends on Zn(2+) as a cofactor.

In terms of biological role, negatively regulates transcription of bacterial ribonucleotide reductase nrd genes and operons by binding to NrdR-boxes. The sequence is that of Transcriptional repressor NrdR from Cereibacter sphaeroides (strain ATCC 17025 / ATH 2.4.3) (Rhodobacter sphaeroides).